Consider the following 504-residue polypeptide: UDP-N-acetylmuramoylalanine--D-glutamate ligase (504 aa).

An ATP-binding site is contributed by 132–138 (GTNGKTT). Positions 286-295 (DRDASDEPAP) are enriched in basic and acidic residues. Residues 286–305 (DRDASDEPAPKRRRKNEVAT) are disordered.

The protein belongs to the MurCDEF family.

The protein localises to the cytoplasm. The enzyme catalyses UDP-N-acetyl-alpha-D-muramoyl-L-alanine + D-glutamate + ATP = UDP-N-acetyl-alpha-D-muramoyl-L-alanyl-D-glutamate + ADP + phosphate + H(+). It participates in cell wall biogenesis; peptidoglycan biosynthesis. Functionally, cell wall formation. Catalyzes the addition of glutamate to the nucleotide precursor UDP-N-acetylmuramoyl-L-alanine (UMA). In Paraburkholderia xenovorans (strain LB400), this protein is UDP-N-acetylmuramoylalanine--D-glutamate ligase.